The primary structure comprises 505 residues: Glutamate--tRNA ligase (505 aa).

The short motif at 12-22 (PSPTGDPHVGT) is the 'HIGH' region element. The 'KMSKS' region motif lies at 253–257 (KLSKR). Residue lysine 256 coordinates ATP.

This sequence belongs to the class-I aminoacyl-tRNA synthetase family. Glutamate--tRNA ligase type 1 subfamily. As to quaternary structure, monomer.

It localises to the cytoplasm. The enzyme catalyses tRNA(Glu) + L-glutamate + ATP = L-glutamyl-tRNA(Glu) + AMP + diphosphate. In terms of biological role, catalyzes the attachment of glutamate to tRNA(Glu) in a two-step reaction: glutamate is first activated by ATP to form Glu-AMP and then transferred to the acceptor end of tRNA(Glu). The polypeptide is Glutamate--tRNA ligase (Chlamydia pneumoniae (Chlamydophila pneumoniae)).